Reading from the N-terminus, the 65-residue chain is Hirudin-3A (65 aa).

The tract at residues 1–3 (VVY) is interaction with thrombin active site. Cystine bridges form between Cys-6/Cys-14, Cys-16/Cys-28, and Cys-22/Cys-39. Residues 39–65 (CVTGEGTPKPQSHNDGDFEEIPEEYLQ) are disordered. An O-linked (GalNAc...) threonine glycan is attached at Thr-45. The tract at residues 55–65 (DFEEIPEEYLQ) is interaction with fibrinogen-binding exosite of thrombin. The span at 55–65 (DFEEIPEEYLQ) shows a compositional bias: acidic residues. Tyr-63 is modified (sulfotyrosine).

It belongs to the protease inhibitor I14 (hirudin) family.

It localises to the secreted. In terms of biological role, hirudin is a potent thrombin-specific protease inhibitor. It forms a stable non-covalent complex with alpha-thrombin, thereby abolishing its ability to cleave fibrinogen. In Hirudo medicinalis (Medicinal leech), this protein is Hirudin-3A.